The chain runs to 218 residues: MTDTTLIIRQLGIQDYQQVWQQMREFTDTRNALTPDEIWLVQHPAVFTQGQAGKPEHLLNPTDIPVVQSDRGGQITYHGLGQQIMYVLIDIKRHKANGSELNVRQLVTALEQSVVSTLADYGIKSYPKADAPGVYVNEQKICSLGLRIRKGCSFHGLALNINMDLSPFRQINPCGYIGLEMCQMADFIPTEQAQCDKVAPKLVTHFTQLLGYNDVTTY.

One can recognise a BPL/LPL catalytic domain in the interval 32-214; it reads ALTPDEIWLV…HFTQLLGYND (183 aa). Substrate-binding positions include 71–78, 143–145, and 156–158; these read RGGQITYH, SLG, and GLA. The active-site Acyl-thioester intermediate is Cys-174.

This sequence belongs to the LipB family.

It localises to the cytoplasm. It carries out the reaction octanoyl-[ACP] + L-lysyl-[protein] = N(6)-octanoyl-L-lysyl-[protein] + holo-[ACP] + H(+). Its pathway is protein modification; protein lipoylation via endogenous pathway; protein N(6)-(lipoyl)lysine from octanoyl-[acyl-carrier-protein]: step 1/2. Functionally, catalyzes the transfer of endogenously produced octanoic acid from octanoyl-acyl-carrier-protein onto the lipoyl domains of lipoate-dependent enzymes. Lipoyl-ACP can also act as a substrate although octanoyl-ACP is likely to be the physiological substrate. This Histophilus somni (strain 129Pt) (Haemophilus somnus) protein is Octanoyltransferase.